The chain runs to 247 residues: Protein SODIUM POTASSIUM ROOT DEFECTIVE 3 (247 aa).

Positions 130 to 166 are disordered; it reads GSTGQDTVATEESEASAPKRGSSGPVEEKKKSSGSGS. The HMA domain occupies 167–235; it reads DQVVVLRVSL…KVKNAQFWTP (69 aa). A metal cation contacts are provided by C180 and C183.

Its subcellular location is the cytoplasm. In terms of biological role, heavy metal-associated protein involved in salt tolerance. The chain is Protein SODIUM POTASSIUM ROOT DEFECTIVE 3 from Arabidopsis thaliana (Mouse-ear cress).